We begin with the raw amino-acid sequence, 585 residues long: uncharacterized protein (585 aa).

The segment at 27-59 is disordered; the sequence is DDSERSVKSVSVSISDDEDSKTDVQDNMATPST.

This is an uncharacterized protein from Saccharomyces cerevisiae (strain ATCC 204508 / S288c) (Baker's yeast).